A 581-amino-acid polypeptide reads, in one-letter code: Proline--tRNA ligase (581 aa).

It belongs to the class-II aminoacyl-tRNA synthetase family. ProS type 1 subfamily. As to quaternary structure, homodimer.

It localises to the cytoplasm. It carries out the reaction tRNA(Pro) + L-proline + ATP = L-prolyl-tRNA(Pro) + AMP + diphosphate. Catalyzes the attachment of proline to tRNA(Pro) in a two-step reaction: proline is first activated by ATP to form Pro-AMP and then transferred to the acceptor end of tRNA(Pro). As ProRS can inadvertently accommodate and process non-cognate amino acids such as alanine and cysteine, to avoid such errors it has two additional distinct editing activities against alanine. One activity is designated as 'pretransfer' editing and involves the tRNA(Pro)-independent hydrolysis of activated Ala-AMP. The other activity is designated 'posttransfer' editing and involves deacylation of mischarged Ala-tRNA(Pro). The misacylated Cys-tRNA(Pro) is not edited by ProRS. The sequence is that of Proline--tRNA ligase from Rhodococcus opacus (strain B4).